The following is a 125-amino-acid chain: Small ribosomal subunit protein uS13 (125 aa).

Belongs to the universal ribosomal protein uS13 family. As to quaternary structure, part of the 30S ribosomal subunit. Forms a loose heterodimer with protein S19. Forms two bridges to the 50S subunit in the 70S ribosome.

Its function is as follows. Located at the top of the head of the 30S subunit, it contacts several helices of the 16S rRNA. In the 70S ribosome it contacts the 23S rRNA (bridge B1a) and protein L5 of the 50S subunit (bridge B1b), connecting the 2 subunits; these bridges are implicated in subunit movement. Contacts the tRNAs in the A and P-sites. This is Small ribosomal subunit protein uS13 from Gluconacetobacter diazotrophicus (strain ATCC 49037 / DSM 5601 / CCUG 37298 / CIP 103539 / LMG 7603 / PAl5).